Here is a 386-residue protein sequence, read N- to C-terminus: Ovalbumin (386 aa).

Glycine 2 carries the post-translational modification N-acetylglycine. A Phosphoserine modification is found at serine 69. Cysteine 74 and cysteine 121 form a disulfide bridge. Asparagine 293 carries N-linked (GlcNAc...) asparagine glycosylation. The residue at position 345 (serine 345) is a Phosphoserine.

Belongs to the serpin family. Ov-serpin subfamily. In terms of processing, the N-terminus is blocked.

The protein resides in the secreted. Storage protein of egg white. Lacks protease inhibitory activity. The chain is Ovalbumin (SERPINB14) from Dromaius novaehollandiae (Emu).